The sequence spans 418 residues: Secernin-3 (418 aa).

The propeptide occupies 1 to 5 (MEPYS). C6 is an active-site residue. C6 carries the post-translational modification Glyoxylic acid (Cys); alternate. Residue C6 is modified to Pyruvic acid (Cys); alternate.

The protein belongs to the peptidase C69 family. Secernin subfamily.

Functionally, plays a role in thermal nociception. The sequence is that of Secernin-3 (Scrn3) from Mus musculus (Mouse).